Consider the following 108-residue polypeptide: UPF0145 protein HDEF_1024 (108 aa).

The protein belongs to the UPF0145 family.

This Hamiltonella defensa subsp. Acyrthosiphon pisum (strain 5AT) protein is UPF0145 protein HDEF_1024.